Reading from the N-terminus, the 447-residue chain is Tubulin beta-1 chain (447 aa).

GTP contacts are provided by Gln-11, Glu-69, Ser-138, Gly-142, Thr-143, Gly-144, Asn-204, and Asn-226. Glu-69 provides a ligand contact to Mg(2+). Residues 428 to 447 are disordered; the sequence is ATADEDAEFDEEQEQEIEDN. Over residues 429–447 the composition is skewed to acidic residues; it reads TADEDAEFDEEQEQEIEDN.

Belongs to the tubulin family. As to quaternary structure, dimer of alpha and beta chains. A typical microtubule is a hollow water-filled tube with an outer diameter of 25 nm and an inner diameter of 15 nM. Alpha-beta heterodimers associate head-to-tail to form protofilaments running lengthwise along the microtubule wall with the beta-tubulin subunit facing the microtubule plus end conferring a structural polarity. Microtubules usually have 13 protofilaments but different protofilament numbers can be found in some organisms and specialized cells. It depends on Mg(2+) as a cofactor.

It is found in the cytoplasm. It localises to the cytoskeleton. Tubulin is the major constituent of microtubules, a cylinder consisting of laterally associated linear protofilaments composed of alpha- and beta-tubulin heterodimers. Microtubules grow by the addition of GTP-tubulin dimers to the microtubule end, where a stabilizing cap forms. Below the cap, tubulin dimers are in GDP-bound state, owing to GTPase activity of alpha-tubulin. In Manduca sexta (Tobacco hawkmoth), this protein is Tubulin beta-1 chain.